The sequence spans 411 residues: uncharacterized protein (411 aa).

Disordered regions lie at residues 1-91 (METP…QDEE) and 253-280 (KGPL…AYSP). Positions 46–57 (ETTESADSENDM) are enriched in acidic residues. Positions 74-86 (SNESFSSNQSTES) are enriched in low complexity. The span at 258–272 (RRNEEDENKPQEKRP) shows a compositional bias: basic and acidic residues. S279 bears the Phosphoserine mark.

In terms of tissue distribution, widely expressed, highest levels in cerebellum, brain cortex, hippocampus, pons, putamen and amygdala. Highly expressed in neurons, but also present in glial cells. Slightly higher expression in the dorsolateral prefrontal cortex of schizophrenic patients compared to control individuals.

Its subcellular location is the cytoplasm. This is an uncharacterized protein from Homo sapiens (Human).